Reading from the N-terminus, the 309-residue chain is Foldase protein PrsA 2 (309 aa).

Positions 1–22 are cleaved as a signal peptide; sequence MKQMNKLITGVVTLATVVTLSA. A lipid anchor (N-palmitoyl cysteine) is attached at Cys23. Residue Cys23 is the site of S-diacylglycerol cysteine attachment. A PpiC domain is found at 146-241; it reads TPTMTAEIMQ…RTYHIIKVTK (96 aa).

It belongs to the PrsA family.

Its subcellular location is the cell membrane. It carries out the reaction [protein]-peptidylproline (omega=180) = [protein]-peptidylproline (omega=0). In terms of biological role, plays a major role in protein secretion by helping the post-translocational extracellular folding of several secreted proteins. This Streptococcus pyogenes serotype M3 (strain ATCC BAA-595 / MGAS315) protein is Foldase protein PrsA 2 (prsA2).